The sequence spans 201 residues: MDKFTTLEGVAAPLKIINVDTDMIIPKQYLKTIKRTGLGRGLFSEQRYRDDGSENPDFVLNKSAYRNARILVAGDNFGCGSSREHAPWALLDFGIRCVISTSFGDIFYNNCFKNGILPIRVTQADLDKLFDDAERGANATLTIDLANQEIRGPDGGTVKFEIDAFRKHCLLNGLDDIGLTMEKKAAIDSYEDKAKRERAWA.

The protein belongs to the LeuD family. LeuD type 1 subfamily. In terms of assembly, heterodimer of LeuC and LeuD.

It catalyses the reaction (2R,3S)-3-isopropylmalate = (2S)-2-isopropylmalate. Its pathway is amino-acid biosynthesis; L-leucine biosynthesis; L-leucine from 3-methyl-2-oxobutanoate: step 2/4. In terms of biological role, catalyzes the isomerization between 2-isopropylmalate and 3-isopropylmalate, via the formation of 2-isopropylmaleate. The sequence is that of 3-isopropylmalate dehydratase small subunit from Nitrobacter winogradskyi (strain ATCC 25391 / DSM 10237 / CIP 104748 / NCIMB 11846 / Nb-255).